A 149-amino-acid polypeptide reads, in one-letter code: Calmodulin-1 (149 aa).

Ala2 is modified (N-acetylalanine). EF-hand domains are found at residues Glu8–Asn43, Pro44–Asp79, Asp81–Lys116, and Leu117–Lys149. Ca(2+) is bound by residues Asp21, Asp23, Asp25, Thr27, Glu32, Asp57, Asp59, Asn61, Thr63, Glu68, Asp94, Asp96, Asn98, and Glu105. Lys116 is subject to N6,N6,N6-trimethyllysine. 5 residues coordinate Ca(2+): Asp130, Asp132, Asp134, Gln136, and Glu141.

Belongs to the calmodulin family.

Its function is as follows. Calmodulin mediates the control of a large number of enzymes, ion channels and other proteins by Ca(2+). Among the enzymes to be stimulated by the calmodulin-Ca(2+) complex are a number of protein kinases and phosphatases. The protein is Calmodulin-1 of Branchiostoma floridae (Florida lancelet).